Here is a 334-residue protein sequence, read N- to C-terminus: D-fructose 1,6-bisphosphatase class 2/sedoheptulose 1,7-bisphosphatase (334 aa).

Asp33, Glu57, Asp85, and Glu88 together coordinate Mn(2+). Substrate is bound by residues 88-90 (EGT), Tyr119, 164-166 (RAR), and 186-188 (DGD). Glu213 serves as a coordination point for Mn(2+).

It belongs to the FBPase class 2 family. In terms of assembly, homotetramer. It depends on Mn(2+) as a cofactor.

It catalyses the reaction beta-D-fructose 1,6-bisphosphate + H2O = beta-D-fructose 6-phosphate + phosphate. It carries out the reaction D-sedoheptulose 1,7-bisphosphate + H2O = D-sedoheptulose 7-phosphate + phosphate. It functions in the pathway carbohydrate biosynthesis; Calvin cycle. Its function is as follows. Catalyzes the hydrolysis of fructose 1,6-bisphosphate (Fru 1,6-P2) and sedoheptulose 1,7-bisphosphate (Sed 1,7-P2) to fructose 6-phosphate and sedoheptulose 7-phosphate, respectively. In Parasynechococcus marenigrum (strain WH8102), this protein is D-fructose 1,6-bisphosphatase class 2/sedoheptulose 1,7-bisphosphatase.